A 389-amino-acid polypeptide reads, in one-letter code: Fructose-1,6-bisphosphate aldolase/phosphatase (389 aa).

Aspartate 17 functions as the Proton acceptor; for FBP phosphatase activity in the catalytic mechanism. Aspartate 17, histidine 24, aspartate 57, and aspartate 58 together coordinate Mg(2+). Histidine 24 contributes to the beta-D-fructose 1,6-bisphosphate binding site. Histidine 24 contacts dihydroxyacetone phosphate. Residue tyrosine 95 participates in beta-D-fructose 1,6-bisphosphate binding. Glutamine 99 lines the Mg(2+) pocket. 108-109 (GN) is a binding site for beta-D-fructose 1,6-bisphosphate. Residue aspartate 136 coordinates Mg(2+). A beta-D-fructose 1,6-bisphosphate-binding site is contributed by lysine 137. Position 137 (lysine 137) interacts with dihydroxyacetone phosphate. Tyrosine 233 acts as the Proton donor/acceptor; for FBP aldolase activity in catalysis. The Mg(2+) site is built by lysine 236, aspartate 237, and aspartate 238. The active-site Schiff-base intermediate with DHAP; for FBP aldolase activity is lysine 236. Beta-D-fructose 1,6-bisphosphate contacts are provided by residues 246–247 (QS), arginine 270, aspartate 291, and tyrosine 352. Dihydroxyacetone phosphate is bound by residues arginine 270 and aspartate 291.

It belongs to the FBP aldolase/phosphatase family. Homooctamer; dimer of tetramers. The cofactor is Mg(2+).

It catalyses the reaction beta-D-fructose 1,6-bisphosphate + H2O = beta-D-fructose 6-phosphate + phosphate. It carries out the reaction beta-D-fructose 1,6-bisphosphate = D-glyceraldehyde 3-phosphate + dihydroxyacetone phosphate. It participates in carbohydrate biosynthesis; gluconeogenesis. In terms of biological role, catalyzes two subsequent steps in gluconeogenesis: the aldol condensation of dihydroxyacetone phosphate (DHAP) and glyceraldehyde-3-phosphate (GA3P) to fructose-1,6-bisphosphate (FBP), and the dephosphorylation of FBP to fructose-6-phosphate (F6P). The sequence is that of Fructose-1,6-bisphosphate aldolase/phosphatase from Methanocaldococcus jannaschii (strain ATCC 43067 / DSM 2661 / JAL-1 / JCM 10045 / NBRC 100440) (Methanococcus jannaschii).